Consider the following 209-residue polypeptide: Large ribosomal subunit protein uL4 (209 aa).

It belongs to the universal ribosomal protein uL4 family. Part of the 50S ribosomal subunit.

One of the primary rRNA binding proteins, this protein initially binds near the 5'-end of the 23S rRNA. It is important during the early stages of 50S assembly. It makes multiple contacts with different domains of the 23S rRNA in the assembled 50S subunit and ribosome. In terms of biological role, forms part of the polypeptide exit tunnel. This chain is Large ribosomal subunit protein uL4, found in Borrelia duttonii (strain Ly).